The chain runs to 1025 residues: Multidrug resistance protein MdtC (1025 aa).

12 consecutive transmembrane segments (helical) span residues 3-23 (FFAL…AITL), 333-353 (EVEQ…FLFL), 360-380 (LIPA…MYLC), 387-407 (LSLM…IVVL), 431-451 (VGFT…PLLL), 463-483 (FAVT…TLTP), 528-548 (IVGL…ITIP), 853-873 (VILI…LYES), 875-895 (VHPL…LLAL), 897-917 (LFDA…IGIV), 953-973 (PIMM…ISSG), and 984-1004 (ITIV…TPVV).

This sequence belongs to the resistance-nodulation-cell division (RND) (TC 2.A.6) family. MdtC subfamily. As to quaternary structure, part of a tripartite efflux system composed of MdtA, MdtB and MdtC. MdtC forms a heteromultimer with MdtB.

The protein localises to the cell inner membrane. In Enterobacter sp. (strain 638), this protein is Multidrug resistance protein MdtC.